The chain runs to 700 residues: Calpain-2 catalytic subunit (700 aa).

Ala2 carries the N-acetylalanine modification. Residues Ala2–Gly19 constitute a propeptide, anchors to the small subunit. The region spanning Leu45–Thr344 is the Calpain catalytic domain. Ca(2+)-binding residues include Gly91 and Asp96. Cys105 is a catalytic residue. Residues Glu175, Gln229, and Lys230 each coordinate Ca(2+). Residues His262 and Asn286 contribute to the active site. The Ca(2+) site is built by Glu292, Asp299, and Glu323. The domain III stretch occupies residues Pro345–Asp514. Residues Glu515–Asp529 are linker. A domain IV region spans residues Ile530–Leu700. The Ca(2+) site is built by Ala542, Asp545, Glu547, Glu552, Asp585, Asp587, Ser589, Lys591, Glu596, Asp615, Asp617, Ser619, Thr621, Glu626, Asp658, and Asn661. 3 consecutive EF-hand domains span residues Phe572–Phe597, Thr602–Lys637, and Asp652–Leu672.

It belongs to the peptidase C2 family. Forms a heterodimer with a small (regulatory) subunit (CAPNS1). Interacts with CPEB3; this leads to cleavage of CPEB3. Ca(2+) serves as cofactor. In terms of tissue distribution, ubiquitous.

It is found in the cytoplasm. The protein resides in the cell membrane. The enzyme catalyses Broad endopeptidase specificity.. Activated by 200-1000 micromolar concentrations of calcium and inhibited by calpastatin. Calcium-regulated non-lysosomal thiol-protease which catalyzes limited proteolysis of substrates involved in cytoskeletal remodeling and signal transduction. Proteolytically cleaves MYOC at 'Arg-226'. Proteolytically cleaves CPEB3 following neuronal stimulation which abolishes CPEB3 translational repressor activity, leading to translation of CPEB3 target mRNAs. This is Calpain-2 catalytic subunit (CAPN2) from Bos taurus (Bovine).